Reading from the N-terminus, the 454-residue chain is Replicative DNA helicase DnaC (454 aa).

Residues 179 to 445 (RKGDITGIPT…NKFVNLERRF (267 aa)) form the SF4 helicase domain. 210 to 217 (ARPSVGKT) serves as a coordination point for ATP.

This sequence belongs to the helicase family. DnaB subfamily. The DNA replisome assembles sequentially on oriC in this order; DnaA, DnaD, DnaB, DnaI-DnaC helicase. Monomer in the absence of ATP, in its presence forms a probable homohexamer which is not active as a helicase in vitro. Interacts separately and simultaneously with helicase loaders DnaB and DnaI. Interaction with DnaB does not require ATP. Interaction with DnaI requires ATP, probably forms a DnaC(6):DnaI(6) complex, which is not active as a helicase.

Its subcellular location is the cytoplasm. The protein resides in the nucleoid. It carries out the reaction Couples ATP hydrolysis with the unwinding of duplex DNA at the replication fork by translocating in the 5'-3' direction. This creates two antiparallel DNA single strands (ssDNA). The leading ssDNA polymer is the template for DNA polymerase III holoenzyme which synthesizes a continuous strand.. The enzyme catalyses ATP + H2O = ADP + phosphate + H(+). In terms of biological role, the main replicative DNA helicase, it participates in initiation and elongation during chromosome replication. Travels ahead of the DNA replisome, separating dsDNA into templates for DNA synthesis. The monomer has helicase activity in the presence of DnaI which is further increased by DnaB; the purified oligomeric form (probably a DnaC hexamer) does not have helicase activity in vitro, nor does the DnaC(6):DnaI(6) complex. The direction was not determined but is probably 5'-3'. Helicase activity requires an rNTP and is inactive with dNTPs. Has weak ATPase activity as a monomer, as an oligomer has ATPase activity which is stimulated by single-stranded (ss)DNA and further stimulated by DnaI and more by DnaB. Functionally, deletion of a single T residue in the promoter region (a run of 8 Ts becomes 7 Ts) decreases the helicase levels by 50%, decreasing DNA replication inititation during fast growth in rich medium. Suppresses the synthetic lethality of a dnaA1-yabA deletion for growth on rich medium. This chain is Replicative DNA helicase DnaC, found in Bacillus subtilis (strain 168).